We begin with the raw amino-acid sequence, 284 residues long: Transcription factor lir-3 (284 aa).

Residues 50–60 (EPRISRDELRE) show a composition bias toward basic and acidic residues. Residues 50 to 71 (EPRISRDELRETASSPVTFETR) are disordered. The C2H2-type zinc-finger motif lies at 224–247 (YKCKQCDYLDYRKSTMRKHTVSQH).

In terms of tissue distribution, expressed in FLP neurons.

It is found in the nucleus. In terms of biological role, positively regulates the RNA polymerase III-associated transcription of small non-coding RNAs. The chain is Transcription factor lir-3 from Caenorhabditis elegans.